The following is a 148-amino-acid chain: Holo-[acyl-carrier-protein] synthase (148 aa).

Positions 8 and 57 each coordinate Mg(2+).

This sequence belongs to the P-Pant transferase superfamily. AcpS family. The cofactor is Mg(2+).

It localises to the cytoplasm. It carries out the reaction apo-[ACP] + CoA = holo-[ACP] + adenosine 3',5'-bisphosphate + H(+). In terms of biological role, transfers the 4'-phosphopantetheine moiety from coenzyme A to a Ser of acyl-carrier-protein. This is Holo-[acyl-carrier-protein] synthase from Ruegeria pomeroyi (strain ATCC 700808 / DSM 15171 / DSS-3) (Silicibacter pomeroyi).